Reading from the N-terminus, the 272-residue chain is Peptidoglycolipid exporter Gap (272 aa).

6 helical membrane passes run 5–25 (ILGL…ILLV), 36–56 (VVFW…PLFV), 79–99 (IEPF…VIAL), 171–191 (LWVA…VLLV), 206–226 (IIAV…TLLS), and 252–272 (ILLV…LGVI).

The protein belongs to the peptidoglycolipid addressing protein (GAP) (TC 2.A.116) family.

The protein resides in the cell inner membrane. In terms of biological role, required for the transport of peptidoglycolipids (GPLs) to the cell surface. This chain is Peptidoglycolipid exporter Gap, found in Mycolicibacterium smegmatis (strain ATCC 700084 / mc(2)155) (Mycobacterium smegmatis).